The sequence spans 97 residues: Coiled-coil domain-containing protein 167 (97 aa).

A coiled-coil region spans residues 10–79; sequence GVALEIDGLE…LRQENRKNML (70 aa). A helical membrane pass occupies residues 77 to 97; the sequence is NMLLSVAIFLLLTVIYAYWAL.

Its subcellular location is the membrane. The polypeptide is Coiled-coil domain-containing protein 167 (CCDC167) (Bos taurus (Bovine)).